Consider the following 143-residue polypeptide: UPF0306 protein plu4501 (143 aa).

It belongs to the UPF0306 family.

The sequence is that of UPF0306 protein plu4501 from Photorhabdus laumondii subsp. laumondii (strain DSM 15139 / CIP 105565 / TT01) (Photorhabdus luminescens subsp. laumondii).